Consider the following 301-residue polypeptide: Multifunctional dioxygenase ausE (301 aa).

Substrate-binding residues include Arg-72 and Gln-127. Fe cation is bound by residues His-130 and Asp-132. Residue Thr-167 participates in substrate binding. His-214 lines the Fe cation pocket. A substrate-binding site is contributed by Arg-226.

It belongs to the PhyH family. As to quaternary structure, homodimer. The cofactor is Fe cation.

It carries out the reaction preaustinoid A1 + 2-oxoglutarate + O2 = preaustinoid A2 + succinate + CO2 + H2O. It catalyses the reaction preaustinoid A2 + 2-oxoglutarate + O2 = preaustinoid A3 + succinate + CO2 + H2O. The catalysed reaction is berkeleyone A + 2-oxoglutarate + O2 = preaustinoid A + succinate + CO2 + H2O. It functions in the pathway secondary metabolite biosynthesis; terpenoid biosynthesis. Its function is as follows. Multifunctional dioxygenase; part of the gene cluster A that mediates the biosynthesis of the fungal meroterpenoid acetoxydehydroaustin. The first step of the pathway is the synthesis of 3,5-dimethylorsellinic acid by the polyketide synthase ausA. 3,5-dimethylorsellinic acid is then prenylated by the polyprenyl transferase ausN. Further epoxidation by the FAD-dependent monooxygenase ausM and cyclization by the probable terpene cyclase ausL lead to the formation of protoaustinoid A. Protoaustinoid A is then oxidized to spiro-lactone preaustinoid A3 by the combined action of the FAD-binding monooxygenases ausB and ausC, and the dioxygenase ausE. Acid-catalyzed keto-rearrangement and ring contraction of the tetraketide portion of preaustinoid A3 by ausJ lead to the formation of preaustinoid A4. The aldo-keto reductase ausK, with the help of ausH, is involved in the next step by transforming preaustinoid A4 into isoaustinone which is in turn hydroxylated by the P450 monooxygenase ausI to form austinolide. The cytochrome P450 monooxygenase ausG then modifies austinolide to austinol. Austinol is further acetylated to austin by the O-acetyltransferase ausP, which spontaneously changes to dehydroaustin. The cytochrome P450 monooxygenase then converts dehydroaustin is into 7-dehydrodehydroaustin. The hydroxylation catalyzed by ausR permits the second O-acetyltransferase ausQ to add an additional acetyl group to the molecule, leading to the formation of acetoxydehydroaustin. Due to genetic rearrangements of the clusters and the subsequent loss of some enzymes, the end product of the Penicillium brasilianum austinoid biosynthesis clusters is acetoxydehydroaustin. This Penicillium brasilianum protein is Multifunctional dioxygenase ausE.